A 320-amino-acid polypeptide reads, in one-letter code: Probable cell division protein WhiA (320 aa).

A DNA-binding region (H-T-H motif) is located at residues 282-315 (TLKELGEMLSPAIGKSGVNHRLRKIDEIATKLQE).

This sequence belongs to the WhiA family.

In terms of biological role, involved in cell division and chromosome segregation. In Alkaliphilus oremlandii (strain OhILAs) (Clostridium oremlandii (strain OhILAs)), this protein is Probable cell division protein WhiA.